Reading from the N-terminus, the 595-residue chain is Wee1-like protein kinase 1-B (595 aa).

Residues 1-17 (MNVQPRNMNVQPRNMNV) show a composition bias toward polar residues. The segment at 1-127 (MNVQPRNMNV…CPGTPPHKTF (127 aa)) is disordered. Positions 111-122 (PTSPIPECPGTP) are enriched in pro residues. T186 carries the phosphothreonine; by cdk1 modification. Residues 248–518 (FHELEKIGSG…SVALVKHSVL (271 aa)) enclose the Protein kinase domain. Residues 254-262 (IGSGEFGSV) and K277 each bind ATP. D375 acts as the Proton acceptor in catalysis. N380 and D412 together coordinate Mg(2+). Positions 526–563 (AEQLRIELDAEKFKNALLQKELKKAQIAKAAAEERAHF) form a coiled coil.

Belongs to the protein kinase superfamily. Ser/Thr protein kinase family. WEE1 subfamily. In terms of assembly, interacts (when phosphorylated at Thr-186) with pin1. Post-translationally, phosphorylation at Thr-186 during M-phase by cdk1 inhibits the kinase activity and leads to interaction with pin1. Zygotically expressed. Present in oocytes and postgastrula embryos (at least until the tailbud stage). Expression begins at the midblastula stage and increases after the early gastrula stage.

It is found in the nucleus. It carries out the reaction L-tyrosyl-[protein] + ATP = O-phospho-L-tyrosyl-[protein] + ADP + H(+). Its function is as follows. Acts as a zygotic negative regulator of entry into mitosis (G2 to M transition) by protecting the nucleus from cytoplasmically activated cyclin B1-complexed cdk1 before the onset of mitosis by mediating phosphorylation of cdk1 on 'Tyr-15'. Specifically phosphorylates and inactivates cyclin B1-complexed cdk1 reaching a maximum during G2 phase and a minimum as cells enter M phase. Phosphorylation of cyclin B1-cdk1 occurs exclusively on 'Tyr-15' and phosphorylation of monomeric cdk1 does not occur. The sequence is that of Wee1-like protein kinase 1-B (wee1-b) from Xenopus laevis (African clawed frog).